The sequence spans 444 residues: tRNA pseudouridine synthase Pus10 (444 aa).

Catalysis depends on aspartate 265, which acts as the Nucleophile. 2 residues coordinate substrate: tyrosine 333 and tyrosine 405.

It belongs to the pseudouridine synthase Pus10 family.

It carries out the reaction uridine(54) in tRNA = pseudouridine(54) in tRNA. It catalyses the reaction uridine(55) in tRNA = pseudouridine(55) in tRNA. Functionally, responsible for synthesis of pseudouridine from uracil-54 and uracil-55 in the psi GC loop of transfer RNAs. This chain is tRNA pseudouridine synthase Pus10, found in Thermofilum pendens (strain DSM 2475 / Hrk 5).